The sequence spans 81 residues: CLAVATA3/ESR (CLE)-related protein 6 (81 aa).

The signal sequence occupies residues 1-26; the sequence is MANLILKQSLIILLIIYSTPILSSQA. Residues proline 73 and proline 76 each carry the hydroxyproline modification. O-linked (Ara...) hydroxyproline glycosylation is present at proline 76.

This sequence belongs to the CLV3/ESR signal peptide family. The O-glycosylation (arabinosylation) of the hydroxyproline Pro-76 enhances binding affinity of the CLE6p peptide for its receptor. Mostly expressed in roots, seedlings, stems and flowers, and, to a lower extent, in apex and siliques.

The protein localises to the secreted. It localises to the extracellular space. Functionally, extracellular signal peptide that regulates cell fate. The polypeptide is CLAVATA3/ESR (CLE)-related protein 6 (Arabidopsis thaliana (Mouse-ear cress)).